The following is a 370-amino-acid chain: Dual-specificity RNA methyltransferase RlmN (370 aa).

E93 acts as the Proton acceptor in catalysis. The Radical SAM core domain occupies 99–331; sequence DRKRGTLCVS…TRVRRTRGDD (233 aa). A disulfide bridge links C106 with C336. [4Fe-4S] cluster contacts are provided by C113, C117, and C120. S-adenosyl-L-methionine-binding positions include 162-163, S194, 216-218, and N293; these read GE and SLH. Catalysis depends on C336, which acts as the S-methylcysteine intermediate.

It belongs to the radical SAM superfamily. RlmN family. Requires [4Fe-4S] cluster as cofactor.

The protein resides in the cytoplasm. The enzyme catalyses adenosine(2503) in 23S rRNA + 2 reduced [2Fe-2S]-[ferredoxin] + 2 S-adenosyl-L-methionine = 2-methyladenosine(2503) in 23S rRNA + 5'-deoxyadenosine + L-methionine + 2 oxidized [2Fe-2S]-[ferredoxin] + S-adenosyl-L-homocysteine. It catalyses the reaction adenosine(37) in tRNA + 2 reduced [2Fe-2S]-[ferredoxin] + 2 S-adenosyl-L-methionine = 2-methyladenosine(37) in tRNA + 5'-deoxyadenosine + L-methionine + 2 oxidized [2Fe-2S]-[ferredoxin] + S-adenosyl-L-homocysteine. Functionally, specifically methylates position 2 of adenine 2503 in 23S rRNA and position 2 of adenine 37 in tRNAs. m2A2503 modification seems to play a crucial role in the proofreading step occurring at the peptidyl transferase center and thus would serve to optimize ribosomal fidelity. The sequence is that of Dual-specificity RNA methyltransferase RlmN from Coxiella burnetii (strain CbuK_Q154) (Coxiella burnetii (strain Q154)).